Here is a 206-residue protein sequence, read N- to C-terminus: LexA repressor (206 aa).

Positions 28–48 (RAEIARRLGFKSANAAEEHLK) form a DNA-binding region, H-T-H motif. Residues Ser123 and Lys160 each act as for autocatalytic cleavage activity in the active site.

This sequence belongs to the peptidase S24 family. In terms of assembly, homodimer.

It catalyses the reaction Hydrolysis of Ala-|-Gly bond in repressor LexA.. In terms of biological role, represses a number of genes involved in the response to DNA damage (SOS response), including recA and lexA. In the presence of single-stranded DNA, RecA interacts with LexA causing an autocatalytic cleavage which disrupts the DNA-binding part of LexA, leading to derepression of the SOS regulon and eventually DNA repair. This Shewanella piezotolerans (strain WP3 / JCM 13877) protein is LexA repressor.